The primary structure comprises 131 residues: Profilin LP04 (131 aa).

It belongs to the profilin family. In terms of assembly, occurs in many kinds of cells as a complex with monomeric actin in a 1:1 ratio.

It is found in the cytoplasm. Its subcellular location is the cytoskeleton. Its function is as follows. Binds to actin and affects the structure of the cytoskeleton. At high concentrations, profilin prevents the polymerization of actin, whereas it enhances it at low concentrations. By binding to PIP2, it inhibits the formation of IP3 and DG. The chain is Profilin LP04 from Oryza sativa subsp. indica (Rice).